We begin with the raw amino-acid sequence, 408 residues long: Histidine--tRNA ligase (408 aa).

This sequence belongs to the class-II aminoacyl-tRNA synthetase family. Homodimer.

The protein resides in the cytoplasm. It carries out the reaction tRNA(His) + L-histidine + ATP = L-histidyl-tRNA(His) + AMP + diphosphate + H(+). This is Histidine--tRNA ligase from Campylobacter jejuni subsp. jejuni serotype O:23/36 (strain 81-176).